The primary structure comprises 805 residues: MMSARYPRTAAEWTTRIQGVSSERCDLEMLLKDEWRNRIAVRDDDPGVRATRQRDIVVDGREYTALKDALRAADGVSAGALALASLHSVMRAYGHGEQTVAAFVDATATAELKTAAVLPVIVDHIEHTRLTCAEAIRELDETLRRKDSYTRADEVLQRGLFDALLVLAEREVALSELPSAPLVMVVRDDAARGRLCWTMAYAGELFEDTTVAGVLEVVREVLGQYAGRPGDRVAEIELASREQRERLQRWNATDGDFPADQRLNDLVEAAVRRSPDREAVVFGTQRLTYREVDARANRFAHWLLGPGLGVRSQQLVGIFLDKSDLGVVATLGIWKAGAAYVPIDPAYPAERVRFAVGDTGLRGIVTNRHHAGRLREILGAEHADVTVVEIESVLDEQAAADTDGLLSVKPELALGVRDLAYLTYTSGTTGVPKGVPKYHDSVVNSITDLSERYDMRRPGTERVALFASYVFEPHLRQTLIALINGQTLVVVPEEVRLDPDRFPAYIEEHGVTYLNATGSVLQHFDLRRRTSLKRLLLVGEELTAAGLRQLRERFSGRIVNEYAFTEAAFVTAVKKFAPGVTERADRSIGRPVRNVKWYVLSQDLKRLPVGAIGELYIGGCGVAPGYLNRDDLTAERFLTNPYASEQDRARGTNARIYRTGDLARMLPSGEVEFMGRSDFQLKLNGVRVEPGEIEAQATEYAGVRKCVVIAREGAGGGSDRHLVGYYLTEPGAGVTEAELLSFLERRLIRIMVPARMVRLESIPVNVNGKVDWRALPEVDLARPDTGGGAVGSTTTGGVRGELREI.

Positions 783 to 805 (PDTGGGAVGSTTTGGVRGELREI) are disordered.

This sequence belongs to the ATP-dependent AMP-binding enzyme family. Pantetheine 4'-phosphate is required as a cofactor.

It carries out the reaction L-2-aminoadipate + L-valine + L-cysteine + 3 ATP + H2O = N-[(5S)-5-amino-5-carboxypentanoyl]-L-cysteinyl-D-valine + 3 AMP + 3 diphosphate + 3 H(+). The protein operates within antibiotic biosynthesis; penicillin G biosynthesis; penicillin G from L-alpha-aminoadipate and L-cysteine and L-valine: step 1/3. In terms of biological role, each of the constituent amino acids of ACV are activated as aminoacyl-adenylates with peptide bonds formed through the participation of amino acid thioester intermediates. This is N-(5-amino-5-carboxypentanoyl)-L-cysteinyl-D-valine synthase (pcbAB) from Streptomyces clavuligerus.